Consider the following 64-residue polypeptide: MPKNKTHSGASKRFKITGSGKVLRERAGKRHLLEHKSSKKTRSLTGTVVVAPADAKKIKKLLGK.

Composition is skewed to basic residues over residues 1–15 and 27–42; these read MPKN…KRFK and AGKR…KKTR. The interval 1–45 is disordered; it reads MPKNKTHSGASKRFKITGSGKVLRERAGKRHLLEHKSSKKTRSLT.

The protein belongs to the bacterial ribosomal protein bL35 family.

The chain is Large ribosomal subunit protein bL35 from Streptomyces griseus subsp. griseus (strain JCM 4626 / CBS 651.72 / NBRC 13350 / KCC S-0626 / ISP 5235).